We begin with the raw amino-acid sequence, 417 residues long: Serine hydroxymethyltransferase (417 aa).

(6S)-5,6,7,8-tetrahydrofolate-binding positions include Leu-122 and Gly-126–Leu-128. At Lys-230 the chain carries N6-(pyridoxal phosphate)lysine. Ser-355–Phe-357 contacts (6S)-5,6,7,8-tetrahydrofolate.

It belongs to the SHMT family. In terms of assembly, homodimer. Pyridoxal 5'-phosphate is required as a cofactor.

It localises to the cytoplasm. The enzyme catalyses (6R)-5,10-methylene-5,6,7,8-tetrahydrofolate + glycine + H2O = (6S)-5,6,7,8-tetrahydrofolate + L-serine. It functions in the pathway one-carbon metabolism; tetrahydrofolate interconversion. The protein operates within amino-acid biosynthesis; glycine biosynthesis; glycine from L-serine: step 1/1. Catalyzes the reversible interconversion of serine and glycine with tetrahydrofolate (THF) serving as the one-carbon carrier. This reaction serves as the major source of one-carbon groups required for the biosynthesis of purines, thymidylate, methionine, and other important biomolecules. Also exhibits THF-independent aldolase activity toward beta-hydroxyamino acids, producing glycine and aldehydes, via a retro-aldol mechanism. The sequence is that of Serine hydroxymethyltransferase from Francisella tularensis subsp. novicida (strain U112).